A 302-amino-acid polypeptide reads, in one-letter code: Oxygen-dependent coproporphyrinogen-III oxidase (302 aa).

Ser94 provides a ligand contact to substrate. The a divalent metal cation site is built by His98 and His108. His108 serves as the catalytic Proton donor. Position 110–112 (110–112) interacts with substrate; that stretch reads NVR. The a divalent metal cation site is built by His147 and His177. The segment at 242 to 277 is important for dimerization; it reads YVEFNLVYDRGTLFGLQTGGRTESILMSMPPLVRWQ. A substrate-binding site is contributed by 260-262; sequence GGR.

The protein belongs to the aerobic coproporphyrinogen-III oxidase family. Homodimer. A divalent metal cation is required as a cofactor.

The protein resides in the cytoplasm. The catalysed reaction is coproporphyrinogen III + O2 + 2 H(+) = protoporphyrinogen IX + 2 CO2 + 2 H2O. It functions in the pathway porphyrin-containing compound metabolism; protoporphyrin-IX biosynthesis; protoporphyrinogen-IX from coproporphyrinogen-III (O2 route): step 1/1. In terms of biological role, involved in the heme biosynthesis. Catalyzes the aerobic oxidative decarboxylation of propionate groups of rings A and B of coproporphyrinogen-III to yield the vinyl groups in protoporphyrinogen-IX. This Shewanella oneidensis (strain ATCC 700550 / JCM 31522 / CIP 106686 / LMG 19005 / NCIMB 14063 / MR-1) protein is Oxygen-dependent coproporphyrinogen-III oxidase.